A 456-amino-acid chain; its full sequence is Bifunctional protein GlmU (456 aa).

Residues 1 to 228 are pyrophosphorylase; the sequence is MPQNTLNIVI…SHLAAGVNNK (228 aa). UDP-N-acetyl-alpha-D-glucosamine is bound by residues 11 to 14, K25, Q75, 80 to 81, 102 to 104, G138, E153, N168, and N226; these read LAAG, GT, and YGD. D104 serves as a coordination point for Mg(2+). Position 226 (N226) interacts with Mg(2+). The interval 229-249 is linker; the sequence is LQLAELERIFQTEQAQELLKA. The tract at residues 250–456 is N-acetyltransferase; that stretch reads GVTLRDPARF…GWVRPEKNKQ (207 aa). UDP-N-acetyl-alpha-D-glucosamine-binding residues include R332 and K350. H362 functions as the Proton acceptor in the catalytic mechanism. UDP-N-acetyl-alpha-D-glucosamine-binding residues include Y365 and N376. Acetyl-CoA-binding positions include A379, 385 to 386, S404, A422, and R439; that span reads NY.

It in the N-terminal section; belongs to the N-acetylglucosamine-1-phosphate uridyltransferase family. In the C-terminal section; belongs to the transferase hexapeptide repeat family. Homotrimer. Requires Mg(2+) as cofactor.

The protein localises to the cytoplasm. It carries out the reaction alpha-D-glucosamine 1-phosphate + acetyl-CoA = N-acetyl-alpha-D-glucosamine 1-phosphate + CoA + H(+). It catalyses the reaction N-acetyl-alpha-D-glucosamine 1-phosphate + UTP + H(+) = UDP-N-acetyl-alpha-D-glucosamine + diphosphate. Its pathway is nucleotide-sugar biosynthesis; UDP-N-acetyl-alpha-D-glucosamine biosynthesis; N-acetyl-alpha-D-glucosamine 1-phosphate from alpha-D-glucosamine 6-phosphate (route II): step 2/2. The protein operates within nucleotide-sugar biosynthesis; UDP-N-acetyl-alpha-D-glucosamine biosynthesis; UDP-N-acetyl-alpha-D-glucosamine from N-acetyl-alpha-D-glucosamine 1-phosphate: step 1/1. It participates in bacterial outer membrane biogenesis; LPS lipid A biosynthesis. Functionally, catalyzes the last two sequential reactions in the de novo biosynthetic pathway for UDP-N-acetylglucosamine (UDP-GlcNAc). The C-terminal domain catalyzes the transfer of acetyl group from acetyl coenzyme A to glucosamine-1-phosphate (GlcN-1-P) to produce N-acetylglucosamine-1-phosphate (GlcNAc-1-P), which is converted into UDP-GlcNAc by the transfer of uridine 5-monophosphate (from uridine 5-triphosphate), a reaction catalyzed by the N-terminal domain. The protein is Bifunctional protein GlmU of Neisseria meningitidis serogroup A / serotype 4A (strain DSM 15465 / Z2491).